A 632-amino-acid polypeptide reads, in one-letter code: Phosphoglucomutase, chloroplastic (632 aa).

A chloroplast-targeting transit peptide spans 1-72; it reads MAMESALTST…PSSPSTSVAQ (72 aa). Positions 97 and 190 each coordinate alpha-D-glucose 1,6-bisphosphate. Ser190 acts as the Phosphoserine intermediate in catalysis. Mg(2+) contacts are provided by Ser190, Asp355, Asp357, and Asp359. Position 190 is a phosphoserine (Ser190). Alpha-D-glucose 1,6-bisphosphate-binding residues include Asp359, Arg360, Thr423, Glu442, Ser444, and Lys455.

It belongs to the phosphohexose mutase family. As to quaternary structure, monomer. Mg(2+) serves as cofactor.

The protein localises to the plastid. It localises to the chloroplast. It catalyses the reaction alpha-D-glucose 1-phosphate = alpha-D-glucose 6-phosphate. The enzyme catalyses O-phospho-L-seryl-[protein] + alpha-D-glucose 1-phosphate = alpha-D-glucose 1,6-bisphosphate + L-seryl-[protein]. The catalysed reaction is alpha-D-glucose 1,6-bisphosphate + L-seryl-[protein] = O-phospho-L-seryl-[protein] + alpha-D-glucose 6-phosphate. With respect to regulation, inhibited by the Calvin cycle intermediates fructose-1,6-bisphosphate and ribulose-1,5-bisphosphate. In terms of biological role, catalyzes the reversible isomerization of alpha-D-glucose 1-phosphate to alpha-D-glucose 6-phosphate. The mechanism proceeds via the intermediate compound alpha-D-glucose 1,6-bisphosphate. This enzyme participates in both the breakdown and synthesis of glucose. Promotes gravitropic responses, negative in shoots but positive in roots, by facilitating starch granules (statoliths) formation. The polypeptide is Phosphoglucomutase, chloroplastic (PGMP) (Solanum tuberosum (Potato)).